Reading from the N-terminus, the 223-residue chain is MKPIIPPQNLSELLERANMMAGISLAQIAAHRGITVPKDLKRDKGWVGQLIEMELGATAGSKPEQDFLHLGVELKTIPIDSKGKPLETTYVCVAPLTNIEGLTWQDSLVCHKLQRVLWVPVEGERHIPVGDRRVGTPILWEPDLQEQRLLQQDWEEIMELIALGKVEKLTARHGEVLQLRPKAANSKALTQSIAEDGSLKMTNPRGFYLKTAFTAMLLNKVFG.

This sequence belongs to the MutH family.

It is found in the cytoplasm. Its function is as follows. Sequence-specific endonuclease that cleaves unmethylated GATC sequences. It is involved in DNA mismatch repair. The chain is DNA mismatch repair protein MutH from Shewanella sp. (strain MR-4).